The following is a 115-amino-acid chain: MEIEKNYRINSLFEFYEPLLTNKQKAYIQLYYADDYSLGEIAAEFSVSRQAVYDNIKRTEKILEGYEAKLHLYHDFVERNHEVDAISDYIKQNYHGDTQLIKMIQQLVNLEADSE.

This sequence belongs to the UPF0122 family.

In terms of biological role, might take part in the signal recognition particle (SRP) pathway. This is inferred from the conservation of its genetic proximity to ftsY/ffh. May be a regulatory protein. The sequence is that of UPF0122 protein lp_1634 from Lactiplantibacillus plantarum (strain ATCC BAA-793 / NCIMB 8826 / WCFS1) (Lactobacillus plantarum).